The primary structure comprises 211 residues: Uridine kinase (211 aa).

An ATP-binding site is contributed by 15-22 (GGSGSGKT).

Belongs to the uridine kinase family.

It localises to the cytoplasm. The enzyme catalyses uridine + ATP = UMP + ADP + H(+). The catalysed reaction is cytidine + ATP = CMP + ADP + H(+). Its pathway is pyrimidine metabolism; CTP biosynthesis via salvage pathway; CTP from cytidine: step 1/3. It functions in the pathway pyrimidine metabolism; UMP biosynthesis via salvage pathway; UMP from uridine: step 1/1. The protein is Uridine kinase of Latilactobacillus sakei subsp. sakei (strain 23K) (Lactobacillus sakei subsp. sakei).